The primary structure comprises 289 residues: Ribosomal RNA small subunit methyltransferase A (289 aa).

Residues Asn-21, Leu-23, Gly-48, Glu-69, Asp-94, and Asn-120 each contribute to the S-adenosyl-L-methionine site.

This sequence belongs to the class I-like SAM-binding methyltransferase superfamily. rRNA adenine N(6)-methyltransferase family. RsmA subfamily.

Its subcellular location is the cytoplasm. It catalyses the reaction adenosine(1518)/adenosine(1519) in 16S rRNA + 4 S-adenosyl-L-methionine = N(6)-dimethyladenosine(1518)/N(6)-dimethyladenosine(1519) in 16S rRNA + 4 S-adenosyl-L-homocysteine + 4 H(+). Specifically dimethylates two adjacent adenosines (A1518 and A1519) in the loop of a conserved hairpin near the 3'-end of 16S rRNA in the 30S particle. May play a critical role in biogenesis of 30S subunits. The protein is Ribosomal RNA small subunit methyltransferase A of Actinobacillus pleuropneumoniae serotype 3 (strain JL03).